Consider the following 228-residue polypeptide: MTKSHLLKYLLTSPNLPVGGFCYSEGMESYLHNKNLNDSNSVKELIISELKIGQIRLDAKLLLDFFDIFNEINDGKNAKSNLQKLLSLNKWILSSKDSIEMREQQTQMAKSLFDLTKEFGFEYLYENNKKSSWPLAWSWACFCFEITKIEMVENFFYAWSANQLSAALRIIPIGSTKTQLIQRDLLAIISKVSKEIMDKQIDDIYFGNVGLAMAQQNHNDLYTKLFRN.

Belongs to the UreF family. UreD, UreF and UreG form a complex that acts as a GTP-hydrolysis-dependent molecular chaperone, activating the urease apoprotein by helping to assemble the nickel containing metallocenter of UreC. The UreE protein probably delivers the nickel.

It is found in the cytoplasm. Functionally, required for maturation of urease via the functional incorporation of the urease nickel metallocenter. The chain is Urease accessory protein UreF from Prochlorococcus marinus (strain MIT 9312).